A 161-amino-acid chain; its full sequence is Large ribosomal subunit protein uL15 (161 aa).

A disordered region spans residues 1-43 (MKLSEISDNPGARKKRMRIGRGIGSGKGKTGGRGGKGQTARSG). A compositionally biased stretch (gly residues) spans 21–37 (RGIGSGKGKTGGRGGKG).

It belongs to the universal ribosomal protein uL15 family. In terms of assembly, part of the 50S ribosomal subunit.

Binds to the 23S rRNA. The polypeptide is Large ribosomal subunit protein uL15 (Rhodopseudomonas palustris (strain BisB5)).